The chain runs to 157 residues: Baculoviral IAP repeat-containing protein 5.2-B (157 aa).

One copy of the BIR repeat lies at 31 to 101 (RLRTFSNWPF…KHSPSCLFIA (71 aa)). Residue threonine 47 is modified to Phosphothreonine; by CDK1. Zn(2+) is bound by residues cysteine 70, cysteine 73, histidine 90, and cysteine 97.

This sequence belongs to the IAP family. In terms of assembly, component of the CPC at least composed of survivin/birc5, incenp, cdca8/borealin and/or cdca9/dasra-A, and aurkb/aurora-B. Interacts directly with incenp (via N-terminus). Interacts with rxra; the interaction is stronger in the absence of 9-cis retinoic acids. Ubiquitination is required for centrosome-targeting. As to expression, exhibits strong and homogeneous expression in developing oocytes. In embryos, expressed in the animal hemisphere from one-cell to yolk plug stages, and highly expressed in the future brain and dorsal region of the neural tube at the neurula stage and early tail-bud stage. At tadpole stages, expression is restricted at a low level to the head region.

It localises to the cytoplasm. Its subcellular location is the nucleus. It is found in the chromosome. The protein localises to the centromere. The protein resides in the cytoskeleton. It localises to the spindle. Does not appear to exhibit anti-apoptotic activity. Plays a role in increasing blood vessel size during development. Component of the chromosomal passenger complex (CPC), a complex that acts as a key regulator of mitosis. The CPC complex has essential functions at the centromere in ensuring correct chromosome alignment and segregation and is required for chromatin-induced microtubule stabilization and spindle assembly. The sequence is that of Baculoviral IAP repeat-containing protein 5.2-B (birc5.2-b) from Xenopus laevis (African clawed frog).